A 130-amino-acid chain; its full sequence is Large ribosomal subunit protein bL19 (130 aa).

Belongs to the bacterial ribosomal protein bL19 family.

This protein is located at the 30S-50S ribosomal subunit interface and may play a role in the structure and function of the aminoacyl-tRNA binding site. This Parvibaculum lavamentivorans (strain DS-1 / DSM 13023 / NCIMB 13966) protein is Large ribosomal subunit protein bL19.